A 370-amino-acid polypeptide reads, in one-letter code: tRNA-specific 2-thiouridylase MnmA (370 aa).

Residues 19–26 (AMSGGVDS) and Leu45 each bind ATP. Cys113 (nucleophile) is an active-site residue. A disulfide bridge links Cys113 with Cys209. An ATP-binding site is contributed by Gly137. The interval 159-161 (KDQ) is interaction with tRNA. The active-site Cysteine persulfide intermediate is the Cys209.

The protein belongs to the MnmA/TRMU family.

It localises to the cytoplasm. The catalysed reaction is S-sulfanyl-L-cysteinyl-[protein] + uridine(34) in tRNA + AH2 + ATP = 2-thiouridine(34) in tRNA + L-cysteinyl-[protein] + A + AMP + diphosphate + H(+). In terms of biological role, catalyzes the 2-thiolation of uridine at the wobble position (U34) of tRNA, leading to the formation of s(2)U34. The sequence is that of tRNA-specific 2-thiouridylase MnmA from Rickettsia conorii (strain ATCC VR-613 / Malish 7).